We begin with the raw amino-acid sequence, 183 residues long: Neuroblastoma suppressor of tumorigenicity 1 (183 aa).

The N-terminal stretch at 1–19 is a signal peptide; that stretch reads MVMCVRAVLVCVLLELSRA. 5 cysteine pairs are disulfide-bonded: cysteine 38–cysteine 88, cysteine 52–cysteine 102, cysteine 62–cysteine 121, cysteine 66–cysteine 123, and cysteine 85–cysteine 126. The 90-residue stretch at 38 to 127 folds into the CTCK domain; that stretch reads CEAKNITQIV…ILHCSCQSCS (90 aa). The disordered stretch occupies residues 145–170; sequence AQDLPSLPDATHTHPQHAHMQADQRD.

The protein belongs to the DAN family.

The protein resides in the secreted. Functionally, may act as a tumor suppressor. This Danio rerio (Zebrafish) protein is Neuroblastoma suppressor of tumorigenicity 1 (nbl1).